The following is a 633-amino-acid chain: Probable potassium transport system protein Kup (633 aa).

The next 12 membrane-spanning stretches (helical) occupy residues 21-41, 61-81, 107-127, 145-165, 176-196, 219-239, 255-275, 293-313, 345-365, 371-391, 402-422, and 427-447; these read LAVG…LYAF, LVSL…VLFL, TAVL…DAMI, PTLS…LFAI, FFGP…IMHI, GFLG…AEAL, WFVL…ALVL, ALLP…QAVI, IFLP…VLSF, LATA…IMAF, LPMA…FLGA, and IHDG…IMWT.

It belongs to the HAK/KUP transporter (TC 2.A.72) family.

It is found in the cell inner membrane. The enzyme catalyses K(+)(in) + H(+)(in) = K(+)(out) + H(+)(out). Transport of potassium into the cell. Likely operates as a K(+):H(+) symporter. In Rhizobium rhizogenes (strain K84 / ATCC BAA-868) (Agrobacterium radiobacter), this protein is Probable potassium transport system protein Kup.